Here is a 368-residue protein sequence, read N- to C-terminus: WD repeat-containing protein wdr-5.1 (368 aa).

Residues 1 to 64 (MDPAQNQPNT…APTTSQESTI (64 aa)) are disordered. A compositionally biased stretch (low complexity) spans 16 to 42 (PAVEEAQGVNNSEAEAPAPAALSSVSP). WD repeat units lie at residues 77 to 116 (GHTK…CERT), 119 to 158 (GHKL…MAKT), 161 to 200 (GHTN…CVKT), 203 to 242 (AHSD…CVKT), 246 to 285 (DENP…TLKQ), 288 to 330 (GHEN…VVQS), and 333 to 368 (GHTQ…RSDS).

The sequence is that of WD repeat-containing protein wdr-5.1 from Caenorhabditis briggsae.